The primary structure comprises 276 residues: Putative pyruvate, phosphate dikinase regulatory protein (276 aa).

Gly153–Thr160 provides a ligand contact to ADP.

It belongs to the pyruvate, phosphate/water dikinase regulatory protein family. PDRP subfamily.

The enzyme catalyses N(tele)-phospho-L-histidyl/L-threonyl-[pyruvate, phosphate dikinase] + ADP = N(tele)-phospho-L-histidyl/O-phospho-L-threonyl-[pyruvate, phosphate dikinase] + AMP + H(+). The catalysed reaction is N(tele)-phospho-L-histidyl/O-phospho-L-threonyl-[pyruvate, phosphate dikinase] + phosphate + H(+) = N(tele)-phospho-L-histidyl/L-threonyl-[pyruvate, phosphate dikinase] + diphosphate. Its function is as follows. Bifunctional serine/threonine kinase and phosphorylase involved in the regulation of the pyruvate, phosphate dikinase (PPDK) by catalyzing its phosphorylation/dephosphorylation. This Brucella anthropi (strain ATCC 49188 / DSM 6882 / CCUG 24695 / JCM 21032 / LMG 3331 / NBRC 15819 / NCTC 12168 / Alc 37) (Ochrobactrum anthropi) protein is Putative pyruvate, phosphate dikinase regulatory protein.